The chain runs to 230 residues: Interleukin-22 receptor subunit alpha-2 (230 aa).

The signal sequence occupies residues 1-20; the sequence is MMPKHCLLGLLIILLSSATE. Fibronectin type-III domains are found at residues 29 to 128 and 129 to 230; these read TPQK…TKLD and PPVV…VHIP. 2 cysteine pairs are disulfide-bonded: Cys-77–Cys-85 and Cys-205–Cys-226.

The protein belongs to the type II cytokine receptor family. In terms of tissue distribution, highly expressed in lymph nodes and at lower levels in lung, spleen, and thymus. Not expressed in kidney, liver and heart.

The protein localises to the secreted. Functionally, receptor for IL22. Binds to IL22, prevents interaction with the functional IL-22R complex and blocks the activity of IL22 (in vitro). May play an important role as an IL22 antagonist in the regulation of inflammatory responses. The chain is Interleukin-22 receptor subunit alpha-2 (Il22ra2) from Mus musculus (Mouse).